The chain runs to 308 residues: tRNA pseudouridine synthase B (308 aa).

Asp-47 functions as the Nucleophile in the catalytic mechanism.

Belongs to the pseudouridine synthase TruB family. Type 1 subfamily.

The catalysed reaction is uridine(55) in tRNA = pseudouridine(55) in tRNA. Its function is as follows. Responsible for synthesis of pseudouridine from uracil-55 in the psi GC loop of transfer RNAs. The sequence is that of tRNA pseudouridine synthase B from Xanthomonas campestris pv. campestris (strain B100).